The primary structure comprises 156 residues: Small ribosomal subunit protein uS7 (156 aa).

The protein belongs to the universal ribosomal protein uS7 family. Part of the 30S ribosomal subunit. Contacts proteins S9 and S11.

In terms of biological role, one of the primary rRNA binding proteins, it binds directly to 16S rRNA where it nucleates assembly of the head domain of the 30S subunit. Is located at the subunit interface close to the decoding center, probably blocks exit of the E-site tRNA. The protein is Small ribosomal subunit protein uS7 of Mycobacteroides abscessus (strain ATCC 19977 / DSM 44196 / CCUG 20993 / CIP 104536 / JCM 13569 / NCTC 13031 / TMC 1543 / L948) (Mycobacterium abscessus).